The chain runs to 746 residues: Exostosin-1 (746 aa).

Over 1-7 (MQAKKRY) the chain is Cytoplasmic. Residues 8–28 (FILLSAGSCLALLFYFGGLQF) traverse the membrane as a helical; Signal-anchor for type II membrane protein segment. Residues 29–746 (RASRSHSRRE…RKKYRDIERL (718 aa)) are Lumenal-facing. Asparagine 89 carries N-linked (GlcNAc...) asparagine glycosylation. Intrachain disulfides connect cysteine 98/cysteine 103 and cysteine 109/cysteine 152. 2 residues coordinate a protein: leucine 166 and tyrosine 203. Lysine 267, lysine 269, tyrosine 271, and arginine 280 together coordinate UDP. A disulfide bridge links cysteine 298 with cysteine 312. Residue histidine 300 coordinates a protein. UDP contacts are provided by tyrosine 319 and tyrosine 324. N-linked (GlcNAc...) asparagine glycosylation occurs at asparagine 330. 2 cysteine pairs are disulfide-bonded: cysteine 334-cysteine 355 and cysteine 652-cysteine 704. 2 residues coordinate UDP: arginine 346 and glutamate 349.

Belongs to the glycosyltransferase 47 family. Part of the heparan sulfate polymerase, a dimeric complex composed of EXT1 and EXT2. Could also form homooligomeric complexes. Interacts with NDST1. In terms of processing, N-glycosylated.

Its subcellular location is the golgi apparatus membrane. It localises to the golgi apparatus. The protein resides in the cis-Golgi network membrane. The protein localises to the endoplasmic reticulum membrane. The catalysed reaction is 3-O-{alpha-D-GlcNAc-[(1-&gt;4)-beta-D-GlcA-(1-&gt;4)-alpha-D-GlcNAc](n)-(1-&gt;4)-beta-D-GlcA-(1-&gt;3)-beta-D-Gal-(1-&gt;3)-beta-D-Gal-(1-&gt;4)-beta-D-Xyl}-L-seryl-[protein] + UDP-alpha-D-glucuronate = 3-O-{[(1-&gt;4)-beta-D-GlcA-(1-&gt;4)-alpha-D-GlcNAc](n+1)-(1-&gt;4)-beta-D-GlcA-(1-&gt;3)-beta-D-Gal-(1-&gt;3)-beta-D-Gal-(1-&gt;4)-beta-D-Xyl}-L-seryl-[protein] + UDP + H(+). It participates in protein modification; protein glycosylation. Its function is as follows. Glycosyltransferase forming with EXT2 the heterodimeric heparan sulfate polymerase which catalyzes the elongation of the heparan sulfate glycan backbone. Glycan backbone extension consists in the alternating transfer of (1-&gt;4)-beta-D-GlcA and (1-&gt;4)-alpha-D-GlcNAc residues from their respective UDP-sugar donors. Both EXT1 and EXT2 are required for the full activity of the polymerase since EXT1 bears the N-acetylglucosaminyl-proteoglycan 4-beta-glucuronosyltransferase activity within the complex while EXT2 carries the glucuronosyl-N-acetylglucosaminyl-proteoglycan 4-alpha-N-acetylglucosaminyltransferase activity. Heparan sulfate proteoglycans are ubiquitous components of the extracellular matrix and play an important role in tissue homeostasis and signaling. This is Exostosin-1 (EXT1) from Pongo abelii (Sumatran orangutan).